A 640-amino-acid chain; its full sequence is Threonine--tRNA ligase (640 aa).

Residues 1–61 enclose the TGS domain; the sequence is MPTITLPDGS…ERDASLQIIT (61 aa). The catalytic stretch occupies residues 242-533; it reads DHRRIGKQLD…LIEHYAGAFP (292 aa). Positions 333, 384, and 510 each coordinate Zn(2+).

This sequence belongs to the class-II aminoacyl-tRNA synthetase family. Homodimer. It depends on Zn(2+) as a cofactor.

It is found in the cytoplasm. It catalyses the reaction tRNA(Thr) + L-threonine + ATP = L-threonyl-tRNA(Thr) + AMP + diphosphate + H(+). Functionally, catalyzes the attachment of threonine to tRNA(Thr) in a two-step reaction: L-threonine is first activated by ATP to form Thr-AMP and then transferred to the acceptor end of tRNA(Thr). Also edits incorrectly charged L-seryl-tRNA(Thr). This chain is Threonine--tRNA ligase, found in Stutzerimonas stutzeri (strain A1501) (Pseudomonas stutzeri).